The following is a 382-amino-acid chain: F-box/LRR-repeat/kelch-repeat protein At1g09650 (382 aa).

One can recognise an F-box domain in the interval 7–52 (CLMMESLPHEVVECILERLDADPLLRFKAVSKQWKSTIESPFFQRR). The stretch at 78-101 (IEALTTLVLGSSSSVKIPTPWEEE) is one LRR 1 repeat. A Kelch 1 repeat occupies 180–227 (PVWLYNSIEIGLENATTCEVFDFSTNAWRYVSPAAPYRIVGCPAPVCV). An LRR 2 repeat occupies 239-262 (ETKILSFDLHTETFQVVSKAPFAN). A Kelch 2 repeat occupies 270–319 (MCNLDNRLCVSEMKLPNQVIWSFNSGNKTWHKMCSINLDITSRWFGPTQV).

The sequence is that of F-box/LRR-repeat/kelch-repeat protein At1g09650 from Arabidopsis thaliana (Mouse-ear cress).